The following is a 985-amino-acid chain: MFLCFCPCHVPIMSRLSPATGISSRLRFSIGLSSDGRLIPFGFRFRRNDVPFKRRLRFVIRAQLSEAFSPDLGLDSQAVKSRDTSNLPWIGPVPGDIAEVEAYCRIFRSAERLHGALMETLCNPVTGECRVPYDFSPEEKPLLEDKIVSVLGCILSLLNKGRKEILSGRSSSMNSFNLDDVGVAEESLPPLAVFRGEMKRCCESLHIALENYLTPDDERSGIVWRKLQKLKNVCYDAGFPRSDNYPCQTLFANWDPIYSSNTKEDIDSYESEIAFWRGGQVTQEGLKWLIENGFKTIVDLRAEIVKDTFYQTALDDAISLGKITVVQIPIDVRMAPKAEQVELFASIVSDSSKRPIYVHSKEGVWRTSAMVSRWKQYMTRPITKEIPVSEESKRREVSETKLGSNAVVSGKGVPDEQTDKVSEINEVDSRSASSQSKESGRFEGDTSASEFNMVSDPLKSQVPPGNIFSRKEMSKFLKSKSIAPAGYLTNPSKILGTVPTPQFSYTGVTNGNQIVDKDSIRRLAETGNSNGTLLPTSSQSLDFGNGKFSNGNVHASDNTNKSISDNRGNGFSAAPIAVPPSDNLSRAVGSHSVRESQTQRNNSGSSSDSSDDEAGAIEGNMCASATGVVRVQSRKKAEMFLVRTDGVSCTREKVTESSLAFTHPSTQQQMLLWKTTPKTVLLLKKLGQELMEEAKEAASFLYHQENMNVLVEPEVHDVFARIPGFGFVQTFYIQDTSDLHERVDFVACLGGDGVILHASNLFKGAVPPVVSFNLGSLGFLTSHPFEDFRQDLKRVIHGNNTLDGVYITLRMRLRCEIYRKGKAMPGKVFDVLNEIVVDRGSNPYLSKIECYEHDRLITKVQGDGVIVATPTGSTAYSTAAGGSMVHPNVPCMLFTPICPHSLSFRPVILPDSAKLELKIPDDARSNAWVSFDGKRRQQLSRGDSVRIYMSQHPLPTVNKSDQTGDWFRSLIRCLNWNERLDQKAL.

Residues 1–62 constitute a chloroplast transit peptide; the sequence is MFLCFCPCHV…KRRLRFVIRA (62 aa). Residues 335–380 are calmodulin-binding; it reads APKAEQVELFASIVSDSSKRPIYVHSKEGVWRTSAMVSRWKQYMTR. Disordered stretches follow at residues 389–466 and 548–615; these read SEES…PPGN and FSNG…DEAG. 2 stretches are compositionally biased toward basic and acidic residues: residues 390 to 399 and 413 to 429; these read EESKRREVSE and VPDE…EVDS. Residues 548–569 are compositionally biased toward polar residues; the sequence is FSNGNVHASDNTNKSISDNRGN.

The protein belongs to the NAD kinase family. Expressed in leaves.

It localises to the plastid. It is found in the chloroplast. The catalysed reaction is NAD(+) + ATP = ADP + NADP(+) + H(+). Involved in chlorophyll synthesis and chloroplast protection against oxidative damage. The sequence is that of NAD kinase 2, chloroplastic (NADK2) from Arabidopsis thaliana (Mouse-ear cress).